A 270-amino-acid chain; its full sequence is MNSAVPGTTHDDIAALTPARARERFRAGERVATSGWCPGFTQANLIAVPQQYAYDVLLFTQRNPKACPVIDVTDAGSVEPGIAPGADLRTDLPGYRVYEEGRLVAETGDAREHWREDMVAFLIGCSFTFERALLESGVPVRHLTAGTNVPMYRTNRACRPAGRLHGPMVVSMRAVPADQVAAAVQVTSRFPSMHGAPVHVGDPAALGIEDLAWPDYGDAPVLADGDVPVFWACGVTPQAVIAAVGIPYAVSHAPGQMFISDVPEATWALA.

Belongs to the D-glutamate cyclase family.

The polypeptide is Putative hydro-lyase Noca_0093 (Nocardioides sp. (strain ATCC BAA-499 / JS614)).